Here is a 316-residue protein sequence, read N- to C-terminus: UDP-N-acetylglucosamine transporter yea4 (316 aa).

Residues 1–3 lie on the Cytoplasmic side of the membrane; that stretch reads MIA. The helical transmembrane segment at 4–24 threads the bilayer; sequence SALSFIFGGCCSNAYALEALV. Residues 25–31 are Lumenal-facing; sequence REFPSSG. The chain crosses the membrane as a helical span at residues 32–52; that stretch reads ILITFSQFILITIEGLIYFLL. The Cytoplasmic segment spans residues 53–67; it reads NDVQSLKHPKVPRKR. The chain crosses the membrane as a helical span at residues 68–88; that stretch reads WFVVVVMFFAINVLNNVALGF. Residues 89 to 120 lie on the Lumenal side of the membrane; sequence DISVPVHIILRSSGPLTTMAVGRILAGKRYSS. A helical membrane pass occupies residues 121 to 141; that stretch reads LQIGSVFILTIGVIIATLGNA. Over 142 to 153 the chain is Cytoplasmic; sequence KDLHLHVESMTR. The helical transmembrane segment at 154–174 threads the bilayer; it reads FGIGFTILVITQILGAIMGLV. The Lumenal segment spans residues 175 to 187; it reads LENTYRIYGSDWR. The chain crosses the membrane as a helical span at residues 188 to 208; that stretch reads ESLFYTHALSLPFFLFLLRPI. The Cytoplasmic portion of the chain corresponds to 209 to 214; sequence RSQWND. Residues 215-235 form a helical membrane-spanning segment; that stretch reads LFAIHTKGFLNLPSGVWYLCF. At 236-274 the chain is on the lumenal side; the sequence is NTLAQYFCVRGVNALGAETSALTVSVVLNVRKFVSLCLS. Residues 275–295 form a helical membrane-spanning segment; it reads LILFENEMGPAVKFGALLVFG. Over 296 to 316 the chain is Cytoplasmic; it reads SSAVYASARSKPKTNGLKKND.

This sequence belongs to the nucleotide-sugar transporter family. SLC35B subfamily.

Its subcellular location is the endoplasmic reticulum. It localises to the endoplasmic reticulum membrane. Sugar transporter that specifically mediates the transport of UDP-N-acetylglucosamine (UDP-GlcNAc) and is required for cell wall chitin synthesis. This is UDP-N-acetylglucosamine transporter yea4 (yea4) from Schizosaccharomyces pombe (strain 972 / ATCC 24843) (Fission yeast).